The following is a 225-amino-acid chain: ATP-dependent dethiobiotin synthetase BioD 1 (225 aa).

13–18 (EVGKTV) lines the ATP pocket. Thr17 provides a ligand contact to Mg(2+). The active site involves Lys38. A substrate-binding site is contributed by Ser42. ATP is bound by residues Asp55, 116-119 (EGAG), 176-177 (ND), 205-207 (PWL), and Glu212. Mg(2+) contacts are provided by Asp55 and Glu116.

The protein belongs to the dethiobiotin synthetase family. Homodimer. Mg(2+) is required as a cofactor.

The protein localises to the cytoplasm. It carries out the reaction (7R,8S)-7,8-diammoniononanoate + CO2 + ATP = (4R,5S)-dethiobiotin + ADP + phosphate + 3 H(+). It functions in the pathway cofactor biosynthesis; biotin biosynthesis; biotin from 7,8-diaminononanoate: step 1/2. Catalyzes a mechanistically unusual reaction, the ATP-dependent insertion of CO2 between the N7 and N8 nitrogen atoms of 7,8-diaminopelargonic acid (DAPA, also called 7,8-diammoniononanoate) to form a ureido ring. The polypeptide is ATP-dependent dethiobiotin synthetase BioD 1 (Escherichia coli O157:H7).